Consider the following 147-residue polypeptide: Lysozyme C-3 (147 aa).

Residues 1–18 form the signal peptide; the sequence is MKALIILGFLFLSVAVQG. Positions 19-147 constitute a C-type lysozyme domain; that stretch reads KVFERCELAR…VSSYVQGCTL (129 aa). Intrachain disulfides connect cysteine 24/cysteine 145, cysteine 48/cysteine 133, cysteine 83/cysteine 99, and cysteine 95/cysteine 113. Residues glutamate 53 and aspartate 71 contribute to the active site.

The protein belongs to the glycosyl hydrolase 22 family. Monomer. In terms of tissue distribution, stomach-specific.

It carries out the reaction Hydrolysis of (1-&gt;4)-beta-linkages between N-acetylmuramic acid and N-acetyl-D-glucosamine residues in a peptidoglycan and between N-acetyl-D-glucosamine residues in chitodextrins.. Functionally, lysozymes have primarily a bacteriolytic function; those in tissues and body fluids are associated with the monocyte-macrophage system and enhance the activity of immunoagents. This is Lysozyme C-3 (LYZ3) from Bos taurus (Bovine).